Here is a 449-residue protein sequence, read N- to C-terminus: NADH-quinone oxidoreductase subunit H (449 aa).

9 helical membrane-spanning segments follow: residues 26-46 (FWLI…MTLF), 96-116 (PIFI…FAVI), 136-156 (LPVS…GLIL), 177-197 (IISY…YAGT), 211-231 (WYIA…GETN), 259-279 (FFFL…TTLF), 298-318 (WVPL…FIWL), 330-350 (FMAF…LVIA), and 365-385 (WLIG…LDPG). The interval 396–449 (AERRKLAEAPSLESIPWPPPPPGGAHHRPAVPAGTSANGSSTVIPADPPPRQES) is disordered.

It belongs to the complex I subunit 1 family. NDH-1 is composed of 14 different subunits. Subunits NuoA, H, J, K, L, M, N constitute the membrane sector of the complex.

It localises to the cell membrane. The catalysed reaction is a quinone + NADH + 5 H(+)(in) = a quinol + NAD(+) + 4 H(+)(out). NDH-1 shuttles electrons from NADH, via FMN and iron-sulfur (Fe-S) centers, to quinones in the respiratory chain. The immediate electron acceptor for the enzyme in this species is believed to be ubiquinone. Couples the redox reaction to proton translocation (for every two electrons transferred, four hydrogen ions are translocated across the cytoplasmic membrane), and thus conserves the redox energy in a proton gradient. This subunit may bind ubiquinone. The sequence is that of NADH-quinone oxidoreductase subunit H from Frankia alni (strain DSM 45986 / CECT 9034 / ACN14a).